We begin with the raw amino-acid sequence, 662 residues long: DNA helicase/primase complex-associated protein (662 aa).

This sequence belongs to the herpesviridae HEPA family. In terms of assembly, associates with the primase and the helicase to form the helicase-primase complex. Interacts with the origin-binding protein. Interacts with the polymerase catalytic subunit.

Its subcellular location is the host nucleus. In terms of biological role, component of the helicase/primase complex. Unwinds the DNA at the replication forks and generates single-stranded DNA for both leading and lagging strand synthesis. The primase synthesizes short RNA primers on the lagging strand that the polymerase presumably elongates using dNTPs. The primase-associated factor has no known catalytic activity in the complex and may serve to facilitate the formation of the replisome by directly interacting with the origin-binding protein and the polymerase. In Human herpesvirus 6B (strain Z29) (HHV-6 variant B), this protein is DNA helicase/primase complex-associated protein (U74).